Here is a 369-residue protein sequence, read N- to C-terminus: Putative gustatory receptor 39b (369 aa).

Residues 1-32 lie on the Cytoplasmic side of the membrane; the sequence is MLYSFHPYLKYFALLGLVPWSESCAQSKFVQK. Residues 33–53 traverse the membrane as a helical segment; the sequence is VYSAILIILNAVHFGISIYFP. At 54-59 the chain is on the extracellular side; that stretch reads QSAELF. A helical membrane pass occupies residues 60–80; sequence LSLMVNVIVFVARIVCVTVII. Residues 81–122 lie on the Cytoplasmic side of the membrane; that stretch reads LQVMVHYDDYFRFCREMKYLGLRLQCELKIHVGRLKWQSYAK. A helical membrane pass occupies residues 123-143; the sequence is ILALGIGFLVTVLPSIYVALS. The Extracellular portion of the chain corresponds to 144-147; the sequence is GSLL. A helical membrane pass occupies residues 148–168; the sequence is YFWSSLLSILIIRMQFVLVLL. At 169–224 the chain is on the cytoplasmic side; the sequence is NVELLGHHVSLLGIRLQNVLECHLMGANCTLDGNANRLCSLEFLLALKQSHMQLHY. A helical membrane pass occupies residues 225 to 245; it reads LFTHFNDLFGWSILGTYVVLF. Over 246–265 the chain is Extracellular; sequence SDSTVNIYWTQQVLVEVYEY. Residues 266–286 traverse the membrane as a helical segment; that stretch reads KYLYATFSVFVPSFFNILVFC. Residues 287 to 348 are Cytoplasmic-facing; it reads RCGEFCQRQS…EGFMSTDNSL (62 aa). Residues 349 to 368 traverse the membrane as a helical segment; the sequence is LMSILAAKVTYLIVLMQFSS. Residue valine 369 is a topological domain, extracellular.

This sequence belongs to the insect chemoreceptor superfamily. Gustatory receptor (GR) family. Gr2a subfamily. As to expression, expressed in the adult labellar chemosensory neurons and in abdominal ganglions. In larvae, is expressed in neurons of the dorsal and posterior pharyngeal sense organs.

It is found in the cell membrane. Probable gustatory receptor which mediates acceptance or avoidance behavior, depending on its substrates. Has also atypical sensory function in organ not limited to conventional taste sensing like abdominal ganglions. The protein is Putative gustatory receptor 39b (Gr39b) of Drosophila melanogaster (Fruit fly).